A 189-amino-acid polypeptide reads, in one-letter code: MKHDEYSINKEDVMIPPLHPVVIGRIIGAYGILGWVRILSFTEKNDNIFYYSPYFIIVQSTWKEIFLDKWKLIGKRYIVKIRGVSNRNSAQSLSRCNIIIDETQFPCINDDEYYWKDLIGCVVITVQGVLLGDIISIIETTANDVLVVKMCQNNLYKIKNCLIPFLIKRVIKNINLVTRTVTVDWDPNF.

Residues 110-189 (DDEYYWKDLI…TVTVDWDPNF (80 aa)) enclose the PRC barrel domain.

The protein belongs to the RimM family. In terms of assembly, binds ribosomal protein uS19.

It is found in the cytoplasm. Functionally, an accessory protein needed during the final step in the assembly of 30S ribosomal subunit, possibly for assembly of the head region. Essential for efficient processing of 16S rRNA. May be needed both before and after RbfA during the maturation of 16S rRNA. It has affinity for free ribosomal 30S subunits but not for 70S ribosomes. The sequence is that of Ribosome maturation factor RimM from Blochmanniella pennsylvanica (strain BPEN).